Reading from the N-terminus, the 69-residue chain is Small, acid-soluble spore protein C1 (69 aa).

This sequence belongs to the alpha/beta-type SASP family.

SASP are bound to spore DNA. They are double-stranded DNA-binding proteins that cause DNA to change to an a-like conformation. They protect the DNA backbone from chemical and enzymatic cleavage and are thus involved in dormant spore's high resistance to UV light. The polypeptide is Small, acid-soluble spore protein C1 (SASP-C1) (Priestia megaterium (Bacillus megaterium)).